Here is a 668-residue protein sequence, read N- to C-terminus: Probable potassium transport system protein Kup (668 aa).

12 consecutive transmembrane segments (helical) span residues 17 to 37 (GILVAMGVVYGDIGTSPLYVM), 59 to 79 (VSLIFWTLTILTTIKYVVIAL), 104 to 124 (IIPAMIGGAALLADGVLTPAV), 148 to 168 (TIIVVITLTIILILFSVQRFG), 175 to 195 (AFGPIMFLWFTFLGIIGLMNF), 221 to 241 (LGLFILGNIFLATTGAEALYS), 256 to 276 (PYIKICLILNYLGQAAWLLTV), 299 to 319 (ILVFGVVFATIAAVIASQALI), 350 to 370 (MYIPAVNLILWLACSAIVLAF), 380 to 400 (YGLSITITMLMTTILLLFYLL), 403 to 423 (IPAWSAYLISLFFAAIEVVFF), and 430 to 450 (FFHGGYVAVGMAVFLLCIMII).

The protein belongs to the HAK/KUP transporter (TC 2.A.72) family.

The protein resides in the cell membrane. It carries out the reaction K(+)(in) + H(+)(in) = K(+)(out) + H(+)(out). In terms of biological role, transport of potassium into the cell. Likely operates as a K(+):H(+) symporter. In Enterococcus faecalis (strain ATCC 700802 / V583), this protein is Probable potassium transport system protein Kup.